Here is a 96-residue protein sequence, read N- to C-terminus: Exopolysaccharide production repressor protein (96 aa).

A run of 2 helical transmembrane segments spans residues 6–26 (FVVS…FLTG) and 35–55 (TLLC…FLVW). Residues 64–96 (LSPGQLPADPTNDEKQTGKLSLRRLNRPPHFNS) form a disordered region.

Its subcellular location is the cell membrane. It functions in the pathway glycan metabolism; exopolysaccharide biosynthesis. In terms of biological role, inhibition of exopolysaccharide synthesis (EPS) and nodulation ability (NOD). The chain is Exopolysaccharide production repressor protein (exoX) from Sinorhizobium fredii (strain NBRC 101917 / NGR234).